A 508-amino-acid polypeptide reads, in one-letter code: GMP synthase [glutamine-hydrolyzing] (508 aa).

Positions 1 to 189 (MILVLDFGSQ…ALLVCGCEKT (189 aa)) constitute a Glutamine amidotransferase type-1 domain. Catalysis depends on Cys78, which acts as the Nucleophile. Active-site residues include His163 and Glu165. The 194-residue stretch at 190 to 383 (WGMQHFAQKE…LGISQDFLMR (194 aa)) folds into the GMPS ATP-PPase domain. 217–223 (SGGVDST) lines the ATP pocket.

In terms of assembly, homodimer.

The catalysed reaction is XMP + L-glutamine + ATP + H2O = GMP + L-glutamate + AMP + diphosphate + 2 H(+). It functions in the pathway purine metabolism; GMP biosynthesis; GMP from XMP (L-Gln route): step 1/1. Catalyzes the synthesis of GMP from XMP. The protein is GMP synthase [glutamine-hydrolyzing] of Helicobacter pylori (strain Shi470).